Reading from the N-terminus, the 27-residue chain is Morintide mO5 (27 aa).

Positions 1-27 (NGLCCSQYGFCGTTSQYCSRANGCQSN) constitute a Chitin-binding type-1 domain. A disulfide bridge links Cys-4 with Cys-18.

Seeds (at protein level).

Functionally, chitin-binding protein which functions in defense against chitin-containing fungal pathogens. In Moringa oleifera (Horseradish tree), this protein is Morintide mO5.